The following is a 33-amino-acid chain: Neutrophil defensin 4 (33 aa).

3 disulfide bridges follow: C3-C31, C5-C20, and C10-C30.

This sequence belongs to the alpha-defensin family. Post-translationally, HANP-2 could be a product of proteolytic N-terminal amino acid removal from HANP-4.

The protein localises to the secreted. Its function is as follows. Bactericidal activity, greater against Gram-positive bacteria. Low anti-fungi activity. This is Neutrophil defensin 4 from Mesocricetus auratus (Golden hamster).